The chain runs to 783 residues: Endonuclease MutS2 (783 aa).

333 to 340 (GPNTGGKT) contributes to the ATP binding site. The Smr domain occupies 708 to 783 (IDLRGKNIEE…GLGATFIYLK (76 aa)).

This sequence belongs to the DNA mismatch repair MutS family. MutS2 subfamily. Homodimer. Binds to stalled ribosomes, contacting rRNA.

Functionally, endonuclease that is involved in the suppression of homologous recombination and thus may have a key role in the control of bacterial genetic diversity. Its function is as follows. Acts as a ribosome collision sensor, splitting the ribosome into its 2 subunits. Detects stalled/collided 70S ribosomes which it binds and splits by an ATP-hydrolysis driven conformational change. Acts upstream of the ribosome quality control system (RQC), a ribosome-associated complex that mediates the extraction of incompletely synthesized nascent chains from stalled ribosomes and their subsequent degradation. Probably generates substrates for RQC. This is Endonuclease MutS2 from Finegoldia magna (strain ATCC 29328 / DSM 20472 / WAL 2508) (Peptostreptococcus magnus).